The sequence spans 109 residues: DNA-directed RNA polymerase subunit I (109 aa).

It catalyses the reaction RNA(n) + a ribonucleoside 5'-triphosphate = RNA(n+1) + diphosphate. In terms of biological role, DNA-dependent RNA polymerase catalyzes the transcription of DNA into RNA using the four ribonucleoside triphosphates as substrates. The sequence is that of DNA-directed RNA polymerase subunit I (rpoI) from Methanocaldococcus jannaschii (strain ATCC 43067 / DSM 2661 / JAL-1 / JCM 10045 / NBRC 100440) (Methanococcus jannaschii).